A 34-amino-acid polypeptide reads, in one-letter code: Potassium channel toxin alpha-KTx 6.2 (34 aa).

Intrachain disulfides connect C3–C24, C9–C29, C13–C19, and C31–C34. C34 bears the Cysteine amide mark.

This sequence belongs to the short scorpion toxin superfamily. Potassium channel inhibitor family. Alpha-KTx 06 subfamily. As to expression, expressed by the venom gland.

The protein resides in the secreted. In terms of biological role, blocks voltage-gated potassium channels Kv1.2/KCNA2 (IC(50)=0.12-0.8 nM), KCa3.1/KCNN4 (IC(50)=1-2.2 nM), Shaker B (IC(50)=2.39-80 nM), Kv1.1/KCNA1 (IC(50)=37-45 or no activity, depending on the study), Kv1.3/KCNA3 (IC(50)=150-180 or no activity, depending on the study). In Scorpio palmatus (Israeli golden scorpion), this protein is Potassium channel toxin alpha-KTx 6.2.